Consider the following 146-residue polypeptide: Ribonuclease H (146 aa).

The 142-residue stretch at 1–142 (MNKIIIYTDG…ADALANLAMD (142 aa)) folds into the RNase H type-1 domain. Mg(2+) contacts are provided by aspartate 9, glutamate 47, aspartate 70, and aspartate 134.

This sequence belongs to the RNase H family. As to quaternary structure, monomer. It depends on Mg(2+) as a cofactor.

Its subcellular location is the cytoplasm. It carries out the reaction Endonucleolytic cleavage to 5'-phosphomonoester.. Endonuclease that specifically degrades the RNA of RNA-DNA hybrids. The chain is Ribonuclease H from Ruthia magnifica subsp. Calyptogena magnifica.